The following is a 444-amino-acid chain: Tubulin beta chain (444 aa).

Positions 11, 69, 138, 142, 143, 144, 204, and 226 each coordinate GTP. A Mg(2+)-binding site is contributed by Glu69.

It belongs to the tubulin family. Dimer of alpha and beta chains. A typical microtubule is a hollow water-filled tube with an outer diameter of 25 nm and an inner diameter of 15 nM. Alpha-beta heterodimers associate head-to-tail to form protofilaments running lengthwise along the microtubule wall with the beta-tubulin subunit facing the microtubule plus end conferring a structural polarity. Microtubules usually have 13 protofilaments but different protofilament numbers can be found in some organisms and specialized cells. Mg(2+) serves as cofactor.

It localises to the cytoplasm. The protein resides in the cytoskeleton. Tubulin is the major constituent of microtubules, a cylinder consisting of laterally associated linear protofilaments composed of alpha- and beta-tubulin heterodimers. Microtubules grow by the addition of GTP-tubulin dimers to the microtubule end, where a stabilizing cap forms. Below the cap, tubulin dimers are in GDP-bound state, owing to GTPase activity of alpha-tubulin. In Phytophthora cinnamomi (Cinnamon fungus), this protein is Tubulin beta chain.